We begin with the raw amino-acid sequence, 112 residues long: Beta-defensin 126 (112 aa).

The first 20 residues, 1–20 (MKSLLFTLAVFMLLAQLVSG), serve as a signal peptide directing secretion. The tract at residues 21–63 (NWYVKKCLNDVGICKKKCKPEELHVKNGRAMCGKQRDCCVPAD) is in vitro binds to LPS, mediates antimicrobial activity and inhibits LPS-mediated inflammation. 3 cysteine pairs are disulfide-bonded: C27–C58, C34–C52, and C38–C59.

This sequence belongs to the beta-defensin family. As to quaternary structure, homodimer or homooligomer; disulfide-linked. O-glycosylated; glycans contain alpha(2,3)-linked sialic acids.

The protein localises to the secreted. In terms of biological role, highly glycosylated atypical beta-defensin involved in several aspects of sperm function. Facilitates sperm transport in the female reproductive tract and contributes to sperm protection against immunodetection; both functions are probably implicating the negative surface charge provided by its O-linked oligosaccharides in the sperm glycocalyx. Involved in binding of sperm to oviductal epithelial cells to form a sperm reservoir until ovulation. Release from the sperm surface during capacitation and ovaluation by an elevation of oviductal fluid pH is unmasking other surface components and allows sperm to penetrate the cumulus matrix and bind to the zona pellucida of the oocyte. In vitro has antimicrobial activity and may inhibit LPS-mediated inflammation. This chain is Beta-defensin 126 (DEFB126), found in Hylobates lar (Lar gibbon).